The sequence spans 968 residues: RNA polymerase-associated protein RapA (968 aa).

Positions 164–334 (DVGRRHAPRV…FARLRLLDPN (171 aa)) constitute a Helicase ATP-binding domain. 177–184 (DEVGLGKT) is a binding site for ATP. A DEAH box motif is present at residues 280–283 (DEAH). A Helicase C-terminal domain is found at 490–685 (RVEWLMGYLT…ALKAQLEQGR (196 aa)).

This sequence belongs to the SNF2/RAD54 helicase family. RapA subfamily. Interacts with the RNAP. Has a higher affinity for the core RNAP than for the holoenzyme. Its ATPase activity is stimulated by binding to RNAP.

Its function is as follows. Transcription regulator that activates transcription by stimulating RNA polymerase (RNAP) recycling in case of stress conditions such as supercoiled DNA or high salt concentrations. Probably acts by releasing the RNAP, when it is trapped or immobilized on tightly supercoiled DNA. Does not activate transcription on linear DNA. Probably not involved in DNA repair. The chain is RNA polymerase-associated protein RapA from Salmonella paratyphi C (strain RKS4594).